Reading from the N-terminus, the 384-residue chain is Cell division protein FtsZ (384 aa).

Residues Gly-20–Asn-24, Gly-107–Gly-109, Glu-138, Arg-142, and Asn-186 each bind GTP.

Belongs to the FtsZ family. In terms of assembly, homodimer. Polymerizes to form a dynamic ring structure in a strictly GTP-dependent manner. Interacts directly with several other division proteins.

The protein resides in the cytoplasm. Functionally, essential cell division protein that forms a contractile ring structure (Z ring) at the future cell division site. The regulation of the ring assembly controls the timing and the location of cell division. One of the functions of the FtsZ ring is to recruit other cell division proteins to the septum to produce a new cell wall between the dividing cells. Binds GTP and shows GTPase activity. This Wigglesworthia glossinidia brevipalpis protein is Cell division protein FtsZ.